An 86-amino-acid polypeptide reads, in one-letter code: Large ribosomal subunit protein eL20 (86 aa).

Belongs to the eukaryotic ribosomal protein eL20 family. In terms of assembly, part of the 50S ribosomal subunit. Binds 23S rRNA.

The protein is Large ribosomal subunit protein eL20 of Saccharolobus solfataricus (strain ATCC 35092 / DSM 1617 / JCM 11322 / P2) (Sulfolobus solfataricus).